The sequence spans 1001 residues: uncharacterized protein (1001 aa).

The segment covering K939–S948 has biased composition (basic and acidic residues). The tract at residues K939–N1001 is disordered. A phosphoserine mark is found at S948 and S950.

This is an uncharacterized protein from Schizosaccharomyces pombe (strain 972 / ATCC 24843) (Fission yeast).